The primary structure comprises 483 residues: tRNA sulfurtransferase (483 aa).

The 105-residue stretch at 61–165 folds into the THUMP domain; sequence EAVCDALTRI…DDKLILVNAR (105 aa). Residues 183 to 184, Lys265, Gly287, and Gln296 each bind ATP; that span reads LI. Cys344 and Cys456 are joined by a disulfide. Residues 404–483 form the Rhodanese domain; sequence FATNDVVLDI…FNNVKVYRKK (80 aa). The active-site Cysteine persulfide intermediate is Cys456.

Belongs to the ThiI family.

The protein resides in the cytoplasm. It carries out the reaction [ThiI sulfur-carrier protein]-S-sulfanyl-L-cysteine + a uridine in tRNA + 2 reduced [2Fe-2S]-[ferredoxin] + ATP + H(+) = [ThiI sulfur-carrier protein]-L-cysteine + a 4-thiouridine in tRNA + 2 oxidized [2Fe-2S]-[ferredoxin] + AMP + diphosphate. The catalysed reaction is [ThiS sulfur-carrier protein]-C-terminal Gly-Gly-AMP + S-sulfanyl-L-cysteinyl-[cysteine desulfurase] + AH2 = [ThiS sulfur-carrier protein]-C-terminal-Gly-aminoethanethioate + L-cysteinyl-[cysteine desulfurase] + A + AMP + 2 H(+). Its pathway is cofactor biosynthesis; thiamine diphosphate biosynthesis. In terms of biological role, catalyzes the ATP-dependent transfer of a sulfur to tRNA to produce 4-thiouridine in position 8 of tRNAs, which functions as a near-UV photosensor. Also catalyzes the transfer of sulfur to the sulfur carrier protein ThiS, forming ThiS-thiocarboxylate. This is a step in the synthesis of thiazole, in the thiamine biosynthesis pathway. The sulfur is donated as persulfide by IscS. This is tRNA sulfurtransferase from Proteus mirabilis (strain HI4320).